Here is a 1113-residue protein sequence, read N- to C-terminus: uncharacterized protein (1113 aa).

313–320 contacts ATP; that stretch reads GPPGTGKS.

It belongs to the DNA2/NAM7 helicase family.

This is an uncharacterized protein from Mycoplasma pneumoniae (strain ATCC 29342 / M129 / Subtype 1) (Mycoplasmoides pneumoniae).